Reading from the N-terminus, the 107-residue chain is U20-lycotoxin-Ls1b (107 aa).

A signal peptide spans 1 to 30; it reads MFSTSDQVSKMNSRILSALLILGIATCVIA. In terms of domain architecture, WAP spans 31–76; that stretch reads GGFCPKSRHPQCNLSYKINDCCAQSDCRVGSVCCVEGCGNVCRAES. 5 cysteine pairs are disulfide-bonded: Cys34-Cys64, Cys42-Cys68, Cys51-Cys63, Cys52-Cys90, and Cys57-Cys72.

It belongs to the venom protein 11 family. 02 (wap-2) subfamily. Contains 5 disulfide bonds. Expressed by the venom gland.

The protein resides in the secreted. Its function is as follows. Has antibacterial activity. The chain is U20-lycotoxin-Ls1b from Lycosa singoriensis (Wolf spider).